A 304-amino-acid polypeptide reads, in one-letter code: tRNA pseudouridine synthase B (304 aa).

D38 functions as the Nucleophile in the catalytic mechanism.

The protein belongs to the pseudouridine synthase TruB family. Type 1 subfamily.

It catalyses the reaction uridine(55) in tRNA = pseudouridine(55) in tRNA. Responsible for synthesis of pseudouridine from uracil-55 in the psi GC loop of transfer RNAs. This chain is tRNA pseudouridine synthase B, found in Geobacter sulfurreducens (strain ATCC 51573 / DSM 12127 / PCA).